Here is a 539-residue protein sequence, read N- to C-terminus: Copine-C (539 aa).

2 C2 domains span residues 1–120 (MIPS…KIVA) and 128–251 (VTGK…PLIN). Residues leucine 23, aspartate 24, aspartate 30, aspartate 83, aspartate 85, and aspartate 98 each contribute to the Ca(2+) site. The 218-residue stretch at 290–507 (SLMTAIDCTG…ALAQETLKEI (218 aa)) folds into the VWFA domain.

This sequence belongs to the copine family. Ca(2+) is required as a cofactor.

This chain is Copine-C (cpnC), found in Dictyostelium discoideum (Social amoeba).